The primary structure comprises 800 residues: Phenylalanine--tRNA ligase beta subunit (800 aa).

The region spanning 39-154 (TKDIKNLVVG…ESQVPGTDAL (116 aa)) is the tRNA-binding domain. Positions 408 to 483 (AFITPIDITA…RIYGYDDIPS (76 aa)) constitute a B5 domain. Residues D461, D467, E470, and E471 each contribute to the Mg(2+) site. In terms of domain architecture, FDX-ACB spans 708–800 (PRFPGMSRDI…ALIEQGAVIR (93 aa)).

It belongs to the phenylalanyl-tRNA synthetase beta subunit family. Type 1 subfamily. In terms of assembly, tetramer of two alpha and two beta subunits. Mg(2+) serves as cofactor.

Its subcellular location is the cytoplasm. The enzyme catalyses tRNA(Phe) + L-phenylalanine + ATP = L-phenylalanyl-tRNA(Phe) + AMP + diphosphate + H(+). This Staphylococcus aureus protein is Phenylalanine--tRNA ligase beta subunit.